Consider the following 607-residue polypeptide: Elongation factor 4 (607 aa).

The tr-type G domain maps to 11-193; sequence ENIRNFSIIA…KIVDVVPAPD (183 aa). Residues 23-28 and 140-143 each bind GTP; these read DHGKST and NKID.

It belongs to the TRAFAC class translation factor GTPase superfamily. Classic translation factor GTPase family. LepA subfamily.

The protein resides in the cell membrane. It carries out the reaction GTP + H2O = GDP + phosphate + H(+). Its function is as follows. Required for accurate and efficient protein synthesis under certain stress conditions. May act as a fidelity factor of the translation reaction, by catalyzing a one-codon backward translocation of tRNAs on improperly translocated ribosomes. Back-translocation proceeds from a post-translocation (POST) complex to a pre-translocation (PRE) complex, thus giving elongation factor G a second chance to translocate the tRNAs correctly. Binds to ribosomes in a GTP-dependent manner. In Staphylococcus epidermidis (strain ATCC 35984 / DSM 28319 / BCRC 17069 / CCUG 31568 / BM 3577 / RP62A), this protein is Elongation factor 4.